Reading from the N-terminus, the 377-residue chain is MSPSAVDDAPKATGAAISVKPNIGVFTNPKHDLWISEAEPSADAVKSGADLKPGEVTIAVRSTGICGSDVHFWHAGCIGPMIVEGDHILGHESAGEVIAVHPTVSSLQIGDRVAIEPNIICNACEPCLTGRYNGCEKVEFLSTPPVPGLLRRYVNHPAVWCHKIGNMSWENGALLEPLSVALAGMQRAKVQLGDPVLVCGAGPIGLVSMLCAAAAGACPLVITDISESRLAFAKEICPRVTTHRIEIGKSAEETAKSIVSSFGGVEPAVTLECTGVESSIAAAIWASKFGGKVFVIGVGKNEISIPFMRASVREVDIQLQYRYSNTWPRAIRLIESGVIDLSKFVTHRFPLEDAVKAFETSADPKSGAIKVMIQSLD.

Positions 66, 91, 92, 121, 124, 127, 135, and 176 each coordinate Zn(2+). NAD(+) is bound by residues 203–204 (PI), Asp-224, Arg-229, Ile-296, and 320–322 (QYR).

The protein belongs to the zinc-containing alcohol dehydrogenase family. Homotetramer. The cofactor is Zn(2+). In terms of processing, the N-terminus is blocked.

It carries out the reaction L-arabinitol + NAD(+) = L-xylulose + NADH + H(+). It participates in carbohydrate degradation; L-arabinose degradation via L-arabinitol; D-xylulose 5-phosphate from L-arabinose (fungal route): step 2/5. In terms of biological role, catalyzes the NAD-dependent oxidation of L-arabinitol to L-xylulose in the fungal L-arabinose catabolic pathway. L-arabinose catabolism is important for using plant material as a carbon source. Can partially compensate for xylitol dehydrogenase in xdh1 mutants. Also oxidizes galactitol to L-xylo-3-hexulose as an alternative to the standard Leloir pathway for D-galactose metabolism. NADP cannot act as a cosubstrate. In Hypocrea jecorina (Trichoderma reesei), this protein is L-arabinitol 4-dehydrogenase (lad1).